Reading from the N-terminus, the 671-residue chain is K(+)-insensitive pyrophosphate-energized proton pump (671 aa).

Helical transmembrane passes span 4–24 (LIFTAPLAGLISLTFAAFFAK), 57–77 (TIAVVSVIISLLILFLLDEGL), 79–99 (IAAGFLAGAISSAAAGYIGMS), 128–148 (AVTGLAVIGLALLGTSSLYIL), and 156–176 (VGFGFGASLISLFARAGGGIF). Lys-178 serves as a coordination point for substrate. Residues Asp-181, Asp-185, Asn-208, and Asp-211 each contribute to the Mg(2+) site. The next 6 helical transmembrane spans lie at 223–243 (LFETYVVTSLAAMLLGSLIIG), 249–269 (VLYPLMLGSAAIFASIISVFF), 285–305 (GVGGSTVLSLIAFYYITGFLM), 310–330 (FFYVTVAGVVITVLMVIVTEY), 365–385 (TLVPAVVIAAGILVSYFIVGG), and 393–413 (LYGIAIASVAMLSTAGMIVAL). Asp-421 contacts Mg(2+). 4 helical membrane passes run 452 to 472 (AVTKGYAIGSTALGALALFAD), 490 to 510 (VVLSGILLGAVLPFLFSAVMM), 558 to 578 (MAMPGFLAVIIPLLTGFFLGP), and 579 to 599 (EALAGLLTGLIVVGFMLALMM). 3 residues coordinate Ca(2+): Asp-607, Asp-633, and Asp-637. Lys-640 lines the substrate pocket. A helical membrane pass occupies residues 650-670 (LIKVVNMVAILFSPLIIGGGF).

It belongs to the H(+)-translocating pyrophosphatase (TC 3.A.10) family. K(+)-insensitive subfamily. Homodimer. Mg(2+) is required as a cofactor.

It is found in the cell membrane. The enzyme catalyses diphosphate + H2O + H(+)(in) = 2 phosphate + 2 H(+)(out). Its function is as follows. Proton pump that utilizes the energy of pyrophosphate hydrolysis as the driving force for proton movement across the membrane. Generates a proton motive force. The polypeptide is K(+)-insensitive pyrophosphate-energized proton pump (Methanosarcina mazei (strain ATCC BAA-159 / DSM 3647 / Goe1 / Go1 / JCM 11833 / OCM 88) (Methanosarcina frisia)).